The following is a 550-amino-acid chain: Hydroxylamine reductase (550 aa).

Residues C3, C6, C18, and C25 each coordinate [2Fe-2S] cluster. Hybrid [4Fe-2O-2S] cluster is bound by residues H249, E273, C317, C405, C433, C458, E492, and K494. Cysteine persulfide is present on C405.

The protein belongs to the HCP family. The cofactor is [2Fe-2S] cluster. It depends on hybrid [4Fe-2O-2S] cluster as a cofactor.

It is found in the cytoplasm. The enzyme catalyses A + NH4(+) + H2O = hydroxylamine + AH2 + H(+). Functionally, catalyzes the reduction of hydroxylamine to form NH(3) and H(2)O. In Salmonella dublin (strain CT_02021853), this protein is Hydroxylamine reductase.